A 715-amino-acid polypeptide reads, in one-letter code: Ribosomal RNA large subunit methyltransferase K/L (715 aa).

The 112-residue stretch at L47–F158 folds into the THUMP domain.

Belongs to the methyltransferase superfamily. RlmKL family.

Its subcellular location is the cytoplasm. The enzyme catalyses guanosine(2445) in 23S rRNA + S-adenosyl-L-methionine = N(2)-methylguanosine(2445) in 23S rRNA + S-adenosyl-L-homocysteine + H(+). It carries out the reaction guanosine(2069) in 23S rRNA + S-adenosyl-L-methionine = N(2)-methylguanosine(2069) in 23S rRNA + S-adenosyl-L-homocysteine + H(+). Its function is as follows. Specifically methylates the guanine in position 2445 (m2G2445) and the guanine in position 2069 (m7G2069) of 23S rRNA. The protein is Ribosomal RNA large subunit methyltransferase K/L of Colwellia psychrerythraea (strain 34H / ATCC BAA-681) (Vibrio psychroerythus).